The primary structure comprises 136 residues: Immunoglobulin J chain (136 aa).

Disulfide bonds link C12–C100, C71–C91, and C108–C133. N48 is a glycosylation site (N-linked (GlcNAc...) (complex) asparagine).

As to quaternary structure, part of the secretory IgA (sIgA) complex that consists of two, four or five IgA monomers, and two additional non-Ig polypeptides, namely the JCHAIN and the secretory component (the proteolytic product of PIGR). Part of the secretory IgM (sIgM) complex that consist of five IgM monomers, and two additional non-Ig polypeptides, namely the JCHAIN and the secretory component (the proteolytic product of PIGR). JCHAIN-containing IgM interacts (via CH4 domain) with FCRM (via Ig-like domain).

The protein resides in the secreted. In terms of biological role, serves to link two monomer units of either IgM or IgA. In the case of IgM, the J chain-joined dimer is a nucleating unit for the IgM pentamer, and in the case of IgA it induces dimers and/or larger polymers. It also helps to bind these immunoglobulins to secretory component. The protein is Immunoglobulin J chain of Oryctolagus cuniculus (Rabbit).